Consider the following 177-residue polypeptide: Large ribosomal subunit protein uL6 (177 aa).

Belongs to the universal ribosomal protein uL6 family. In terms of assembly, part of the 50S ribosomal subunit.

Functionally, this protein binds to the 23S rRNA, and is important in its secondary structure. It is located near the subunit interface in the base of the L7/L12 stalk, and near the tRNA binding site of the peptidyltransferase center. The chain is Large ribosomal subunit protein uL6 from Brucella anthropi (strain ATCC 49188 / DSM 6882 / CCUG 24695 / JCM 21032 / LMG 3331 / NBRC 15819 / NCTC 12168 / Alc 37) (Ochrobactrum anthropi).